The following is a 166-amino-acid chain: Interferon gamma (166 aa).

Positions 1-23 (MKYTSYILAFQLCIVLGSLGCYC) are cleaved as a signal peptide. A Pyrrolidone carboxylic acid modification is found at Q24. N-linked (GlcNAc...) asparagine glycosylation is found at N48, N86, and N120.

The protein belongs to the type II (or gamma) interferon family. As to quaternary structure, homodimer. Interacts with IFNGR1 (via extracellular domain); this interaction promotes IFNGR1 dimerization. In terms of tissue distribution, released primarily from activated T lymphocytes.

It localises to the secreted. Its function is as follows. Type II interferon produced by immune cells such as T-cells and NK cells that plays crucial roles in antimicrobial, antiviral, and antitumor responses by activating effector immune cells and enhancing antigen presentation. Primarily signals through the JAK-STAT pathway after interaction with its receptor IFNGR1 to affect gene regulation. Upon IFNG binding, IFNGR1 intracellular domain opens out to allow association of downstream signaling components JAK2, JAK1 and STAT1, leading to STAT1 activation, nuclear translocation and transcription of IFNG-regulated genes. Many of the induced genes are transcription factors such as IRF1 that are able to further drive regulation of a next wave of transcription. Plays a role in class I antigen presentation pathway by inducing a replacement of catalytic proteasome subunits with immunoproteasome subunits. In turn, increases the quantity, quality, and repertoire of peptides for class I MHC loading. Increases the efficiency of peptide generation also by inducing the expression of activator PA28 that associates with the proteasome and alters its proteolytic cleavage preference. Up-regulates as well MHC II complexes on the cell surface by promoting expression of several key molecules such as cathepsins B/CTSB, H/CTSH, and L/CTSL. Participates in the regulation of hematopoietic stem cells during development and under homeostatic conditions by affecting their development, quiescence, and differentiation. The protein is Interferon gamma (IFNG) of Saimiri sciureus (Common squirrel monkey).